The following is a 206-amino-acid chain: Large ribosomal subunit protein uL4 (206 aa).

The interval 63 to 97 is disordered; the sequence is MYKQKGTGRARHHSARAPQFRGGGKAHGPVVRSHE. Positions 64–77 are enriched in basic residues; the sequence is YKQKGTGRARHHSA.

It belongs to the universal ribosomal protein uL4 family. As to quaternary structure, part of the 50S ribosomal subunit.

One of the primary rRNA binding proteins, this protein initially binds near the 5'-end of the 23S rRNA. It is important during the early stages of 50S assembly. It makes multiple contacts with different domains of the 23S rRNA in the assembled 50S subunit and ribosome. Functionally, forms part of the polypeptide exit tunnel. In Rhizobium etli (strain ATCC 51251 / DSM 11541 / JCM 21823 / NBRC 15573 / CFN 42), this protein is Large ribosomal subunit protein uL4.